Here is a 104-residue protein sequence, read N- to C-terminus: N(4)-acetylcytidine amidohydrolase (104 aa).

The ASCH domain maps to 6–102 (ITFYQRFEAD…SEFWVIEIRL (97 aa)). Lys-21 functions as the Proton acceptor in the catalytic mechanism. Residue Thr-24 is the Nucleophile of the active site. Glu-74 serves as the catalytic Proton donor.

This sequence belongs to the N(4)-acetylcytidine amidohydrolase family.

The catalysed reaction is N(4)-acetylcytidine + H2O = cytidine + acetate + H(+). It carries out the reaction N(4)-acetyl-2'-deoxycytidine + H2O = 2'-deoxycytidine + acetate + H(+). It catalyses the reaction N(4)-acetylcytosine + H2O = cytosine + acetate + H(+). Catalyzes the hydrolysis of N(4)-acetylcytidine (ac4C). The sequence is that of N(4)-acetylcytidine amidohydrolase from Haemophilus influenzae (strain PittEE).